The following is a 335-amino-acid chain: NADH-quinone oxidoreductase subunit H (335 aa).

Transmembrane regions (helical) follow at residues 11-31 (VILT…AGAL), 81-101 (VIFT…FAII), 114-134 (IGLL…LFAG), 154-174 (VSYE…VGSF), 187-207 (LWFI…GVAV), 238-258 (FFVG…TLFF), 270-290 (QLSF…FILL), and 307-327 (WKFC…VVLW).

The protein belongs to the complex I subunit 1 family. NDH-1 is composed of 13 different subunits. Subunits NuoA, H, J, K, L, M, N constitute the membrane sector of the complex.

The protein localises to the cell inner membrane. The enzyme catalyses a quinone + NADH + 5 H(+)(in) = a quinol + NAD(+) + 4 H(+)(out). Functionally, NDH-1 shuttles electrons from NADH, via FMN and iron-sulfur (Fe-S) centers, to quinones in the respiratory chain. The immediate electron acceptor for the enzyme in this species is believed to be ubiquinone. Couples the redox reaction to proton translocation (for every two electrons transferred, four hydrogen ions are translocated across the cytoplasmic membrane), and thus conserves the redox energy in a proton gradient. This subunit may bind ubiquinone. This Pseudomonas fluorescens (strain ATCC BAA-477 / NRRL B-23932 / Pf-5) protein is NADH-quinone oxidoreductase subunit H.